Reading from the N-terminus, the 539-residue chain is Acid-sensing ion channel 4-A (539 aa).

The Cytoplasmic segment spans residues 1–68; that stretch reads MPIEFVCKIK…SGRLGVRQTL (68 aa). A helical membrane pass occupies residues 69-89; sequence WALAFLVSLALFLYQAAKCAI. Residues 90–432 lie on the Extracellular side of the membrane; sequence SYLEHPHVTA…EQKKAYDVAG (343 aa). 2 disulfide bridges follow: C116/C200 and C178/C185. 6 N-linked (GlcNAc...) asparagine glycosylation sites follow: N136, N165, N179, N184, N206, and N241. 5 disulfides stabilise this stretch: C294/C369, C313/C365, C317/C363, C326/C347, and C328/C340. N370 is a glycosylation site (N-linked (GlcNAc...) asparagine). The chain crosses the membrane as a helical span at residues 433-453; it reads LLGDIGGQMGLFIGASVLTIL. Residues 446 to 448 carry the GAS motif; ion selectivity filter motif; it reads GAS. Residues 454 to 539 are Cytoplasmic-facing; that stretch reads EILDYVYEVI…HHRVSEDFAC (86 aa). The tract at residues 474-494 is disordered; that stretch reads QRDDKKQTQQQQQASTVATVN.

It belongs to the amiloride-sensitive sodium channel (TC 1.A.6) family. ASIC4 subfamily. Homotrimer. Heterotrimer; with other ASIC proteins producing functional channels. As to expression, expressed in central nervous system.

Its subcellular location is the cell membrane. The enzyme catalyses Na(+)(in) = Na(+)(out). Inhibited by the diuretic drug amiloride. Functionally, could form pH-gated trimeric sodium channels and function as a postsynaptic excitatory receptors in the nervous system. The polypeptide is Acid-sensing ion channel 4-A (Danio rerio (Zebrafish)).